The following is a 241-amino-acid chain: 6-hydroxymethyl-7,8-dihydropterin pyrophosphokinase (241 aa).

The protein belongs to the archaeal 6-HMPDK family. Mg(2+) is required as a cofactor.

The enzyme catalyses 6-hydroxymethyl-7,8-dihydropterin + ATP = (7,8-dihydropterin-6-yl)methyl diphosphate + AMP + H(+). It participates in cofactor biosynthesis; 5,6,7,8-tetrahydromethanopterin biosynthesis. Functionally, catalyzes the transfer of diphosphate from ATP to 6-hydroxymethyl-7,8-dihydropterin (6-HMD), leading to 6-hydroxymethyl-7,8-dihydropterin diphosphate (6-HMDP). This is 6-hydroxymethyl-7,8-dihydropterin pyrophosphokinase from Methanocaldococcus jannaschii (strain ATCC 43067 / DSM 2661 / JAL-1 / JCM 10045 / NBRC 100440) (Methanococcus jannaschii).